A 131-amino-acid chain; its full sequence is Holo-[acyl-carrier-protein] synthase (131 aa).

Residues D8 and E59 each coordinate Mg(2+).

It belongs to the P-Pant transferase superfamily. AcpS family. Requires Mg(2+) as cofactor.

The protein resides in the cytoplasm. The catalysed reaction is apo-[ACP] + CoA = holo-[ACP] + adenosine 3',5'-bisphosphate + H(+). Functionally, transfers the 4'-phosphopantetheine moiety from coenzyme A to a Ser of acyl-carrier-protein. This Rickettsia africae (strain ESF-5) protein is Holo-[acyl-carrier-protein] synthase.